A 325-amino-acid polypeptide reads, in one-letter code: Protein FAM50B (325 aa).

An N-acetylalanine modification is found at Ala2. Disordered regions lie at residues 92–111 (QHLE…EQRR) and 137–160 (RRAG…DREE).

It belongs to the FAM50 family. In terms of tissue distribution, widely expressed. Mostly abundant in testis and adult and fetal brain.

This is Protein FAM50B (FAM50B) from Homo sapiens (Human).